A 158-amino-acid polypeptide reads, in one-letter code: Flagellar assembly factor FliW (158 aa).

This sequence belongs to the FliW family. In terms of assembly, interacts with translational regulator CsrA and flagellin(s).

The protein resides in the cytoplasm. Its function is as follows. Acts as an anti-CsrA protein, binds CsrA and prevents it from repressing translation of its target genes, one of which is flagellin. Binds to flagellin and participates in the assembly of the flagellum. In Moorella thermoacetica (strain ATCC 39073 / JCM 9320), this protein is Flagellar assembly factor FliW.